The chain runs to 234 residues: 2-C-methyl-D-erythritol 4-phosphate cytidylyltransferase (234 aa).

This sequence belongs to the IspD/TarI cytidylyltransferase family. IspD subfamily.

It carries out the reaction 2-C-methyl-D-erythritol 4-phosphate + CTP + H(+) = 4-CDP-2-C-methyl-D-erythritol + diphosphate. The protein operates within isoprenoid biosynthesis; isopentenyl diphosphate biosynthesis via DXP pathway; isopentenyl diphosphate from 1-deoxy-D-xylulose 5-phosphate: step 2/6. Functionally, catalyzes the formation of 4-diphosphocytidyl-2-C-methyl-D-erythritol from CTP and 2-C-methyl-D-erythritol 4-phosphate (MEP). This chain is 2-C-methyl-D-erythritol 4-phosphate cytidylyltransferase, found in Pseudomonas paraeruginosa (strain DSM 24068 / PA7) (Pseudomonas aeruginosa (strain PA7)).